The following is a 54-amino-acid chain: Rubredoxin (54 aa).

One can recognise a Rubredoxin-like domain in the interval 2–52 (AKWVCKICGYIYDEDAGDPDNGISPGTKFEELPDDWVCPICGAPKSEFEKL). Cys-6, Cys-9, Cys-39, and Cys-42 together coordinate Fe cation.

This sequence belongs to the rubredoxin family. Fe(3+) serves as cofactor.

In terms of biological role, rubredoxin is a small nonheme, iron protein lacking acid-labile sulfide. Its single Fe, chelated to 4 Cys, functions as an electron acceptor and may also stabilize the conformation of the molecule. The polypeptide is Rubredoxin (rub) (Pyrococcus furiosus (strain ATCC 43587 / DSM 3638 / JCM 8422 / Vc1)).